The sequence spans 240 residues: UDP-2,3-diacylglucosamine hydrolase (240 aa).

Mn(2+) contacts are provided by Asp-7, His-9, Asp-40, Asn-78, and His-113. Residue 78–79 (NR) coordinates substrate. Substrate is bound by residues Asp-121, Ser-159, Lys-166, and His-194. Mn(2+)-binding residues include His-194 and His-196.

This sequence belongs to the LpxH family. The cofactor is Mn(2+).

The protein resides in the cell inner membrane. The catalysed reaction is UDP-2-N,3-O-bis[(3R)-3-hydroxytetradecanoyl]-alpha-D-glucosamine + H2O = 2-N,3-O-bis[(3R)-3-hydroxytetradecanoyl]-alpha-D-glucosaminyl 1-phosphate + UMP + 2 H(+). It participates in glycolipid biosynthesis; lipid IV(A) biosynthesis; lipid IV(A) from (3R)-3-hydroxytetradecanoyl-[acyl-carrier-protein] and UDP-N-acetyl-alpha-D-glucosamine: step 4/6. Functionally, hydrolyzes the pyrophosphate bond of UDP-2,3-diacylglucosamine to yield 2,3-diacylglucosamine 1-phosphate (lipid X) and UMP by catalyzing the attack of water at the alpha-P atom. Involved in the biosynthesis of lipid A, a phosphorylated glycolipid that anchors the lipopolysaccharide to the outer membrane of the cell. The sequence is that of UDP-2,3-diacylglucosamine hydrolase from Pseudomonas putida (strain ATCC 47054 / DSM 6125 / CFBP 8728 / NCIMB 11950 / KT2440).